Consider the following 1050-residue polypeptide: MQLSLPQILSRRDWENPQITQYHRLEAHPPFHSWRDVESAQKDRPSPQQQTLNGLWSFSYFTQPEAVPEHWVRCDLAEAKPLPVPANWQLHGYDAPIYTNIQYPIPVNPPRVPDLNPTGCYSRDFTLEPSWLASGKTRIIFDGVSSAFYLWCNGQWVGYSQDSRLPAEFDLTPYLQAGSNRIAVLVLRWSDGSYLEDQDMWRMSGIFRDVKLLHKPEIHLRDIHIMTHLSPEFTSANLEVMAAVNIPSLQLNDPQVTGSYQLRVQLWLADKLVASLQQPLGTQAIDERGPYTDRTQLVLRIDQPLLWSAEQPTLYRAVVSLLNHQQELIEAEAYDVGFRQVAIHQGLLKINGKAVLIRGVNRHEHHPQTGQAIDEESLLQDILLMKQHNFNAVRCSHYPNHPLWYRLCDRYGLYVVDEANIETHGMQPMSRLSDDPSWFSAFSERVTRMVQRDRNHPCIIIWSLGNESGHGATHDALYRWIKTNDPTRPVQYEGGGANTLATDILCPMYARVDEDQPFPAVPKWSIKKWIGLPNESRPLILCEYAHAMGNSFGGFARYWQAFRQYPRLQGGFIWDWVDQSLTHHNDHGQPYWAYGGDFGDTPNDRQFCMNGLVFPDRSPHPSLYEAQCAQQFFQFSLLSTTPLVINITSEYLFRESDNEQLYWRIMLEGESVLEGSQPLNLSPESSQCYRLAEKLPTLNKPGQLWLNVEIRQPKETPWSPAQHRSAWHQWRLPQPLFSPSSDLTNATAHYAPQLQHNLQLQHDLQLQQDEQHIKVTYQQQCWQFSRQTGRLAQWWVADKPMLLRPLQDQFVRAPLDNDIGISEATHIDPNAWVERWKKAGMYQLQQRCLSLHVDHLSHSVQISAEYGYEFEQEPLLHSHWVYRFDRHGRMTIDVNVRIATSLPAPARIGMCCQLADISPTVEWLGLGPHENYPDRQLAAQYGHWSLPLEQMHTAYIFPSENGLRCNTHTLNYGRWTLTGDFHFGISRYSTQQLMVTSHQHLLEPEEGTWLNIDGFHMGVGGDDSWSPSVHIDDILTRETYQYQICWQYKV.

Substrate is bound by residues N100 and D199. D199 contributes to the Na(+) binding site. Mg(2+) is bound by residues E422, H424, and E467. Substrate contacts are provided by residues E467 and 543–546 (EYAH). E467 functions as the Proton donor in the catalytic mechanism. E543 serves as the catalytic Nucleophile. Residue N603 coordinates Mg(2+). Na(+) is bound by residues F607 and N610. Substrate-binding residues include N610 and W1025.

It belongs to the glycosyl hydrolase 2 family. Homotetramer. Mg(2+) is required as a cofactor. Requires Na(+) as cofactor.

The catalysed reaction is Hydrolysis of terminal non-reducing beta-D-galactose residues in beta-D-galactosides.. In Yersinia pestis bv. Antiqua (strain Angola), this protein is Beta-galactosidase.